Reading from the N-terminus, the 160-residue chain is UPF0178 protein PLES_56411 (160 aa).

This sequence belongs to the UPF0178 family.

This chain is UPF0178 protein PLES_56411, found in Pseudomonas aeruginosa (strain LESB58).